The following is a 660-amino-acid chain: Bifunctional polymyxin resistance protein ArnA (660 aa).

Positions 1-304 (MKTVVFAYHD…TLGLVQGSRL (304 aa)) are formyltransferase ArnAFT. 86-88 (HLI) contacts (6R)-10-formyltetrahydrofolate. His104 (proton donor; for formyltransferase activity) is an active-site residue. Residues Arg114 and 136–140 (VKRAD) contribute to the (6R)-10-formyltetrahydrofolate site. A dehydrogenase ArnADH region spans residues 314-660 (RRTRVLILGV…RTVDLTDKPL (347 aa)). NAD(+)-binding positions include Asp347 and 368–369 (DI). Residues Ala393, Tyr398, and 432 to 433 (TS) contribute to the UDP-alpha-D-glucuronate site. Glu434 (proton acceptor; for decarboxylase activity) is an active-site residue. UDP-alpha-D-glucuronate contacts are provided by residues Arg460, Asn492, 526-535 (KLIDGGKQKR), and Tyr613. Arg619 serves as the catalytic Proton donor; for decarboxylase activity.

The protein in the N-terminal section; belongs to the Fmt family. UDP-L-Ara4N formyltransferase subfamily. In the C-terminal section; belongs to the NAD(P)-dependent epimerase/dehydratase family. UDP-glucuronic acid decarboxylase subfamily. Homohexamer, formed by a dimer of trimers.

It catalyses the reaction UDP-alpha-D-glucuronate + NAD(+) = UDP-beta-L-threo-pentopyranos-4-ulose + CO2 + NADH. The catalysed reaction is UDP-4-amino-4-deoxy-beta-L-arabinose + (6R)-10-formyltetrahydrofolate = UDP-4-deoxy-4-formamido-beta-L-arabinose + (6S)-5,6,7,8-tetrahydrofolate + H(+). The protein operates within nucleotide-sugar biosynthesis; UDP-4-deoxy-4-formamido-beta-L-arabinose biosynthesis; UDP-4-deoxy-4-formamido-beta-L-arabinose from UDP-alpha-D-glucuronate: step 1/3. Its pathway is nucleotide-sugar biosynthesis; UDP-4-deoxy-4-formamido-beta-L-arabinose biosynthesis; UDP-4-deoxy-4-formamido-beta-L-arabinose from UDP-alpha-D-glucuronate: step 3/3. It participates in bacterial outer membrane biogenesis; lipopolysaccharide biosynthesis. In terms of biological role, bifunctional enzyme that catalyzes the oxidative decarboxylation of UDP-glucuronic acid (UDP-GlcUA) to UDP-4-keto-arabinose (UDP-Ara4O) and the addition of a formyl group to UDP-4-amino-4-deoxy-L-arabinose (UDP-L-Ara4N) to form UDP-L-4-formamido-arabinose (UDP-L-Ara4FN). The modified arabinose is attached to lipid A and is required for resistance to polymyxin and cationic antimicrobial peptides. This is Bifunctional polymyxin resistance protein ArnA from Escherichia coli O6:K15:H31 (strain 536 / UPEC).